The following is a 950-amino-acid chain: MLPLPSELQIQAQNIQQRFYELPAPLSLREEDIAVLVLSDFVSDMLLIHPDWLDELHQQPPQPQEWQFYQQWLSQALAEVQDEAALLAALRLFRRRIMVRIAWSQALETSSTTDTLQQLSWLAESLIIAARDWLYQACCREFGTPCNSEGVPQPLLILGMGKLGGGELNFSSDIDLIFAYPENGQTQGGRRQLDNAQFFTRLGQRLIKALDQQTIDGFVYRVDMRLRPFGDSGPLVLSFAALEDYYQEQGRDWERYAMVKARLMGGAEDHYSKELRQTLRPFVFRRYIDFSVIQSLRNMKGMIAREVRRRGLKDNIKLGAGGIREIEFITQVFQLIRGGREPRLQERALLPTLQAVAELGLLPEQQVADLSGSYLFLRRLENLLQAIADEQTQTLPSDSLNQARLACGMGYVDWVAMNAALEQHMQAVRLVFDHLIGDDAPDIGEDPSHGLYKSLWQDVLEEGDLAPLTPHLDEAARSQLLVTINHFRHDVDKRTIGPRGREVLDQLMPRLFAEVCPRPDANVALSRLIQLLLSIVTRTTYLELLVEYHAALKHVIRLCSASPMVASQLARYPLLLDELLDPQSLYQPLEPSAYRDELRQYLLRVPPDDEEQQLEALRQFKQAQQLRIAAGDITEALPVMKVSDHLTYLAEAMIDAVIQQAWNQMVARYGQPSHLQQREGRGFAVIGYGKLGGWELGYSSDLDLVFLLDCPLDVMTDGERSIDGRQFYLRLAQRVMHLFSTRTSSGILYEVDARLRPSGEAGMLVSTIEAFADYQQNEAWTWEHQALVRARIVYGCPELQQKFDAIRQQILCRSREGSQLQQEVREMREKMRNHLGSKQRDIFDIKADEGGITDIEFIAQYLVLRYAATEPRLTRWSDNVRIFELMANYDIMPEAEAAALTRAYVTMRDEIHHLALQEQSSKVSADCFAAEREQVAASWHKWLVAAPSDV.

An adenylyl removase region spans residues 1-440 (MLPLPSELQI…VFDHLIGDDA (440 aa)). The segment at 449–950 (HGLYKSLWQD…KWLVAAPSDV (502 aa)) is adenylyl transferase.

The protein belongs to the GlnE family. Mg(2+) is required as a cofactor.

The catalysed reaction is [glutamine synthetase]-O(4)-(5'-adenylyl)-L-tyrosine + phosphate = [glutamine synthetase]-L-tyrosine + ADP. It carries out the reaction [glutamine synthetase]-L-tyrosine + ATP = [glutamine synthetase]-O(4)-(5'-adenylyl)-L-tyrosine + diphosphate. Involved in the regulation of glutamine synthetase GlnA, a key enzyme in the process to assimilate ammonia. When cellular nitrogen levels are high, the C-terminal adenylyl transferase (AT) inactivates GlnA by covalent transfer of an adenylyl group from ATP to specific tyrosine residue of GlnA, thus reducing its activity. Conversely, when nitrogen levels are low, the N-terminal adenylyl removase (AR) activates GlnA by removing the adenylyl group by phosphorolysis, increasing its activity. The regulatory region of GlnE binds the signal transduction protein PII (GlnB) which indicates the nitrogen status of the cell. In Yersinia enterocolitica serotype O:8 / biotype 1B (strain NCTC 13174 / 8081), this protein is Bifunctional glutamine synthetase adenylyltransferase/adenylyl-removing enzyme.